The following is a 511-amino-acid chain: Glucose-6-phosphate 1-dehydrogenase, cytoplasmic isoform (511 aa).

NADP(+) is bound by residues 36 to 43 (GASGDLAK), arginine 71, tyrosine 151, and lysine 178. Residues lysine 178, 208–212 (HYLGK), glutamate 246, and aspartate 265 each bind D-glucose 6-phosphate. The Proton acceptor role is filled by histidine 270. Lysine 353 lines the NADP(+) pocket. Lysine 356 and arginine 361 together coordinate D-glucose 6-phosphate. Residues lysine 362, arginine 366, and arginine 390 each contribute to the NADP(+) site. Residue glutamine 392 participates in D-glucose 6-phosphate binding. NADP(+) contacts are provided by residues 398–400 (YMK), 418–420 (DLS), arginine 484, and tryptophan 506.

Belongs to the glucose-6-phosphate dehydrogenase family. Homotetramer. Found in tubers, stolons, roots, and flower buds.

The protein resides in the cytoplasm. It carries out the reaction D-glucose 6-phosphate + NADP(+) = 6-phospho-D-glucono-1,5-lactone + NADPH + H(+). It participates in carbohydrate degradation; pentose phosphate pathway; D-ribulose 5-phosphate from D-glucose 6-phosphate (oxidative stage): step 1/3. With respect to regulation, regulated by metabolites. Its function is as follows. Catalyzes the rate-limiting step of the oxidative pentose-phosphate pathway, which represents a route for the dissimilation of carbohydrates besides glycolysis. The main function of this enzyme is to generate NADPH for reductive biosyntheses. The polypeptide is Glucose-6-phosphate 1-dehydrogenase, cytoplasmic isoform (G6PDH) (Solanum tuberosum (Potato)).